A 629-amino-acid chain; its full sequence is tRNA uridine 5-carboxymethylaminomethyl modification enzyme MnmG (629 aa).

Residues 13–18, Val125, and Ser180 contribute to the FAD site; that span reads GGGHAG. An NAD(+)-binding site is contributed by 273–287; the sequence is GPRYCPSIEDKVMRF. Gln370 contacts FAD.

The protein belongs to the MnmG family. In terms of assembly, homodimer. Heterotetramer of two MnmE and two MnmG subunits. FAD is required as a cofactor.

Its subcellular location is the cytoplasm. Functionally, NAD-binding protein involved in the addition of a carboxymethylaminomethyl (cmnm) group at the wobble position (U34) of certain tRNAs, forming tRNA-cmnm(5)s(2)U34. In Pasteurella multocida (strain Pm70), this protein is tRNA uridine 5-carboxymethylaminomethyl modification enzyme MnmG.